A 185-amino-acid polypeptide reads, in one-letter code: Ribosome-recycling factor (185 aa).

It belongs to the RRF family.

The protein resides in the cytoplasm. Its function is as follows. Responsible for the release of ribosomes from messenger RNA at the termination of protein biosynthesis. May increase the efficiency of translation by recycling ribosomes from one round of translation to another. This is Ribosome-recycling factor from Shewanella sp. (strain ANA-3).